A 110-amino-acid polypeptide reads, in one-letter code: T cell receptor alpha variable 35 (110 aa).

Positions 1–19 (MLLEHLLIILWMQLTWVSG) are cleaved as a signal peptide. Positions 20–110 (QQLNQSPQSM…DVGIYFCAGQ (91 aa)) constitute an Ig-like domain. Residues Asn-40 and Asn-93 are each glycosylated (N-linked (GlcNAc...) asparagine). Cys-41 and Cys-107 are oxidised to a cystine.

As to quaternary structure, alpha-beta TR is a heterodimer composed of an alpha and beta chain; disulfide-linked. The alpha-beta TR is associated with the transmembrane signaling CD3 coreceptor proteins to form the TR-CD3 (TcR or TCR). The assembly of alpha-beta TR heterodimers with CD3 occurs in the endoplasmic reticulum where a single alpha-beta TR heterodimer associates with one CD3D-CD3E heterodimer, one CD3G-CD3E heterodimer and one CD247 homodimer forming a stable octameric structure. CD3D-CD3E and CD3G-CD3E heterodimers preferentially associate with TR alpha and TR beta chains, respectively. The association of the CD247 homodimer is the last step of TcR assembly in the endoplasmic reticulum and is required for transport to the cell surface.

Its subcellular location is the cell membrane. Its function is as follows. V region of the variable domain of T cell receptor (TR) alpha chain that participates in the antigen recognition. Alpha-beta T cell receptors are antigen specific receptors which are essential to the immune response and are present on the cell surface of T lymphocytes. Recognize peptide-major histocompatibility (MH) (pMH) complexes that are displayed by antigen presenting cells (APC), a prerequisite for efficient T cell adaptive immunity against pathogens. Binding of alpha-beta TR to pMH complex initiates TR-CD3 clustering on the cell surface and intracellular activation of LCK that phosphorylates the ITAM motifs of CD3G, CD3D, CD3E and CD247 enabling the recruitment of ZAP70. In turn ZAP70 phosphorylates LAT, which recruits numerous signaling molecules to form the LAT signalosome. The LAT signalosome propagates signal branching to three major signaling pathways, the calcium, the mitogen-activated protein kinase (MAPK) kinase and the nuclear factor NF-kappa-B (NF-kB) pathways, leading to the mobilization of transcription factors that are critical for gene expression and essential for T cell growth and differentiation. The T cell repertoire is generated in the thymus, by V-(D)-J rearrangement. This repertoire is then shaped by intrathymic selection events to generate a peripheral T cell pool of self-MH restricted, non-autoaggressive T cells. Post-thymic interaction of alpha-beta TR with the pMH complexes shapes TR structural and functional avidity. The sequence is that of T cell receptor alpha variable 35 from Homo sapiens (Human).